A 488-amino-acid polypeptide reads, in one-letter code: Acetyl-coenzyme A carboxylase carboxyl transferase subunit beta, chloroplastic (488 aa).

Residues 224–488 form the CoA carboxyltransferase N-terminal domain; sequence LWIQCDNCYG…FFPLNKNEIK (265 aa). The Zn(2+) site is built by Cys-228, Cys-231, Cys-244, and Cys-247. The segment at 228–247 adopts a C4-type zinc-finger fold; that stretch reads CDNCYGLMYKKVEMNVCEEC.

This sequence belongs to the AccD/PCCB family. In terms of assembly, acetyl-CoA carboxylase is a heterohexamer composed of biotin carboxyl carrier protein, biotin carboxylase and 2 subunits each of ACCase subunit alpha and ACCase plastid-coded subunit beta (accD). The cofactor is Zn(2+).

Its subcellular location is the plastid. It localises to the chloroplast stroma. It catalyses the reaction N(6)-carboxybiotinyl-L-lysyl-[protein] + acetyl-CoA = N(6)-biotinyl-L-lysyl-[protein] + malonyl-CoA. Its pathway is lipid metabolism; malonyl-CoA biosynthesis; malonyl-CoA from acetyl-CoA: step 1/1. In terms of biological role, component of the acetyl coenzyme A carboxylase (ACC) complex. Biotin carboxylase (BC) catalyzes the carboxylation of biotin on its carrier protein (BCCP) and then the CO(2) group is transferred by the transcarboxylase to acetyl-CoA to form malonyl-CoA. The chain is Acetyl-coenzyme A carboxylase carboxyl transferase subunit beta, chloroplastic from Arabis hirsuta (Hairy rock-cress).